Consider the following 401-residue polypeptide: MEILVLNLGSSSIKFKLFDMKENKPLASGLAEKIGEEIGQLKIKSHLHHNEQELKEKLVIKDHASGLLMIRENLTKMGIIKDFNQIDAIGHRVVQGGDKFHAPILVNEKVMQEIGKLSILAPLHNPANLAGIEFVQKAHPHIPQIAVFDTAFHATMPSYAYMYALPYELYEKYQIRRYGFHGTSHHYVAKEAAKFLNTAYEEFNAISLHLGNGSSAAAIQKGKSVDTSMGLTPLEGLIMGTRCGDIDPTVVEYIAQCADKSLEEVMKILNYESGLKGICGDNDARNIEARKEKGDKQAKLAFEMCAYRIKKYIGAYMAVLKKVDAIIFTAGLGENYSALRESVCEGLEDLGIALHKPTNDNPGNGLVDLSQPDAKVKVLLIPTDEELEIALQAKEIAEKLK.

Asparagine 7 serves as a coordination point for Mg(2+). Lysine 14 contacts ATP. Arginine 92 serves as a coordination point for substrate. Catalysis depends on aspartate 149, which acts as the Proton donor/acceptor. ATP-binding positions include 209–213 (HLGNG), 283–285 (DAR), and 331–335 (GLGEN). Glutamate 385 contacts Mg(2+).

This sequence belongs to the acetokinase family. As to quaternary structure, homodimer. It depends on Mg(2+) as a cofactor. Mn(2+) is required as a cofactor.

It is found in the cytoplasm. The enzyme catalyses acetate + ATP = acetyl phosphate + ADP. It participates in metabolic intermediate biosynthesis; acetyl-CoA biosynthesis; acetyl-CoA from acetate: step 1/2. In terms of biological role, catalyzes the formation of acetyl phosphate from acetate and ATP. Can also catalyze the reverse reaction. This is Acetate kinase from Helicobacter pylori (strain Shi470).